The chain runs to 35 residues: Photosystem II reaction center protein T (35 aa).

The chain crosses the membrane as a helical span at residues 3–23 (ALVYTFLLVSTLGIIFFAIFF).

Belongs to the PsbT family. In terms of assembly, PSII is composed of 1 copy each of membrane proteins PsbA, PsbB, PsbC, PsbD, PsbE, PsbF, PsbH, PsbI, PsbJ, PsbK, PsbL, PsbM, PsbT, PsbY, PsbZ, Psb30/Ycf12, at least 3 peripheral proteins of the oxygen-evolving complex and a large number of cofactors. It forms dimeric complexes.

The protein localises to the plastid. Its subcellular location is the chloroplast thylakoid membrane. Its function is as follows. Found at the monomer-monomer interface of the photosystem II (PS II) dimer, plays a role in assembly and dimerization of PSII. PSII is a light-driven water plastoquinone oxidoreductase, using light energy to abstract electrons from H(2)O, generating a proton gradient subsequently used for ATP formation. The protein is Photosystem II reaction center protein T of Oenothera argillicola (Appalachian evening primrose).